The following is a 189-amino-acid chain: dCTP deaminase (189 aa).

Residues Lys-112 to Arg-117, Thr-136 to Glu-138, Gln-157, Tyr-171, and Gln-181 each bind dCTP. Glu-138 (proton donor/acceptor) is an active-site residue.

Belongs to the dCTP deaminase family. Homotrimer.

The catalysed reaction is dCTP + H2O + H(+) = dUTP + NH4(+). Its pathway is pyrimidine metabolism; dUMP biosynthesis; dUMP from dCTP (dUTP route): step 1/2. Catalyzes the deamination of dCTP to dUTP. The polypeptide is dCTP deaminase (Xanthomonas oryzae pv. oryzae (strain MAFF 311018)).